The sequence spans 292 residues: MPWLQVRLAITPEQAETFEDALLEVGAVSVTFMDAEDQPIFEPDLGTTPLWSHTHLLALFEADTDETALIAHLQLLCGGTLPEHHVERIEDQDWERSWMDNFQPMRFGQRLWIVPSWHAAPEPDAVNLLLDPGLAFGTGTHPTTALCLEWLDGQNLDGCRVLDFGCGSGILAIAALLLGAPQAVGTDIDPQALEASRDNANRNGIDPARFPVYLPADLPQQPAEVVVANILAGPLVSLAPQITALVQEGGRLALSGILAEQAEEVRAAYAGAFDLDPTAIKDGWVRISGVKR.

Thr144, Gly165, Asp187, and Asn229 together coordinate S-adenosyl-L-methionine.

It belongs to the methyltransferase superfamily. PrmA family.

It localises to the cytoplasm. The enzyme catalyses L-lysyl-[protein] + 3 S-adenosyl-L-methionine = N(6),N(6),N(6)-trimethyl-L-lysyl-[protein] + 3 S-adenosyl-L-homocysteine + 3 H(+). Functionally, methylates ribosomal protein L11. The sequence is that of Ribosomal protein L11 methyltransferase from Ectopseudomonas mendocina (strain ymp) (Pseudomonas mendocina).